The sequence spans 130 residues: Small ribosomal subunit protein uS9 (130 aa).

It belongs to the universal ribosomal protein uS9 family.

The sequence is that of Small ribosomal subunit protein uS9 from Aster yellows witches'-broom phytoplasma (strain AYWB).